Consider the following 417-residue polypeptide: FAD-dependent monooxygenase aptC (417 aa).

The signal sequence occupies residues 1–18; the sequence is MTLPVLIIGAGLSGLTTA. Residues glutamate 32, alanine 43, arginine 117, aspartate 332, and glycine 345 each coordinate FAD.

This sequence belongs to the paxM FAD-dependent monooxygenase family. The cofactor is FAD.

It carries out the reaction 3,6,8,9-tetrahydroxy-1-oxo-3-(2-oxopropyl)-1,2,3,4-tetrahydroanthracene-2-carboxyl-[ACP] + NADPH + O2 + H(+) = 2,3,6,8,9-pentahydroxy-1-oxo-3-(2-oxopropyl)-1,2,3,4-tetrahydroanthracene-2-carboxyl-[ACP] + NADP(+) + H2O. It participates in secondary metabolite biosynthesis. In terms of biological role, FAD-dependent monooxygenase; part of the gene cluster that mediates the biosynthesis of asperthecin, an anthraquinone pigment. Polyketide synthase (PKS) aptA catalyzes the formation of the aromatic polyketide from acetyl coenzyme A and seven malonyl coenzyme A molecules. Polyketide is subsequently hydrolyzed by the action of the hydrolase aptB into endocrocin-9-anthrone. Endocrocin-9-anthrone is then oxidized into endocrocin by the monooxygenase aptC. Endocrocin is likely to decarboxylate spontaneously to form emodin which explains why there is no decarboxylase in the asperthecin biosynthesis cluster. Finally, aptC or another endogenous oxygenase catalyzes additional oxidation steps to form asperthecin. This is FAD-dependent monooxygenase aptC from Emericella nidulans (strain FGSC A4 / ATCC 38163 / CBS 112.46 / NRRL 194 / M139) (Aspergillus nidulans).